Consider the following 827-residue polypeptide: Probable inorganic carbon transporter subunit DabA2 (827 aa).

Residues Cys351, Asp353, His524, and Cys539 each coordinate Zn(2+).

This sequence belongs to the inorganic carbon transporter (TC 9.A.2) DabA family. In terms of assembly, forms a complex with DabB2, possibly a heterodimer. The cofactor is Zn(2+).

The protein localises to the cell inner membrane. With respect to regulation, uptake of inorganic carbon by cells in the presence of thiosulphate is fully inhibited by the uncouplers carbonyl cyanide m-chlorophenyl hydrazone (CCCP), carbonyl cyanide p-trifluoromethoxyphenyl hydrazone (FCCP), S13 or SF6847. Not inhibited by the ATPase inhibitor N,N-dicyclohexylcarbodiimide (DCCD). Inorganic carbon uptake is inhibited by the ionophore CCCP, suggesting uptake is coupled to a cation gradient. Part of an energy-coupled inorganic carbon pump; its substrate may be carbon dioxide. Expression of both dabA2 and dabB2 (DAB2) restores growth in ambient air to E.coli deleted of its carbonic anhydrase genes (called CAfree, deletion of 'can' and 'cynT'); neither dabA2 or dabB2 alone is sufficient. Rescue is pH-independent, suggesting it transports CO(2) and not carbonate ions. Together the genes allow greater than normal uptake of inorganic carbon by E.coli. Uptake of carbon dioxide rather than bicarbonate has been suggested based on kinetic calculations. In Halothiobacillus neapolitanus (strain ATCC 23641 / c2) (Thiobacillus neapolitanus), this protein is Probable inorganic carbon transporter subunit DabA2.